Reading from the N-terminus, the 452-residue chain is Probable diguanylate cyclase DgcT (452 aa).

Over 1–7 (MEKDYLR) the chain is Cytoplasmic. Residues 8 to 28 (ISSTVLVSLLFGLALVLVNSW) form a helical membrane-spanning segment. The Periplasmic segment spans residues 29-45 (FNQPGVEEVVPRSTYLM). The helical transmembrane segment at 46-66 (VMIALFFIDTVAFIFMQLYFI) threads the bilayer. At 67–74 (YDRRQFSN) the chain is on the cytoplasmic side. Residues 75-95 (CVLSLAFLSCLIYFVITVIII) traverse the membrane as a helical segment. Residues 96 to 111 (QQIIEERLTSSVVQND) lie on the Periplasmic side of the membrane. The chain crosses the membrane as a helical span at residues 112–132 (IAIYYLFRQMSLCILIFLALV). The Cytoplasmic portion of the chain corresponds to 133 to 148 (NKVSENTKQRNLFSKK). The helical transmembrane segment at 149 to 169 (MTLCISLFFVFGGPIVAHILS) threads the bilayer. Residues 170–195 (SHYESYNLHIAELTNENGQVVWKASY) lie on the Periplasmic side of the membrane. Residues 196 to 216 (VTIMIFMWLTLLSVNLYFNGL) traverse the membrane as a helical segment. Over 217 to 219 (RYD) the chain is Cytoplasmic. A helical membrane pass occupies residues 220 to 240 (IWNGVTVIAFCAVLYNISLLF). The Periplasmic segment spans residues 241 to 254 (MSRYSVSTWYISRT). The chain crosses the membrane as a helical span at residues 255-275 (IEVVSKLTVMVIFMCHIFSAL). Topologically, residues 276 to 452 (RVTKNIAHRD…RDVVNFCESP (177 aa)) are cytoplasmic. The GGDEF domain maps to 310 to 445 (TPYCVMIMDI…GRNKVVVRDV (136 aa)). Positions 318 and 319 each coordinate Mg(2+). Asn326, His331, and Asp335 together coordinate substrate. Glu361 is a binding site for Mg(2+). Glu361 (proton acceptor) is an active-site residue. Arg381 contacts substrate.

In terms of assembly, homodimer. It depends on Mg(2+) as a cofactor.

It localises to the cell inner membrane. It catalyses the reaction 2 GTP = 3',3'-c-di-GMP + 2 diphosphate. It participates in purine metabolism; 3',5'-cyclic di-GMP biosynthesis. In terms of biological role, probably catalyzes the synthesis of cyclic-di-GMP (c-di-GMP) via the condensation of 2 GTP molecules. Overexpression leads to a strong repression of swimming; swimming returns to normal when residues 359-360 are both mutated to Ala. Overexpression also leads to a 20-fold increase in c-di-GMP levels in vivo. Cyclic-di-GMP is a second messenger which controls cell surface-associated traits in bacteria. This Escherichia coli (strain K12) protein is Probable diguanylate cyclase DgcT.